A 1226-amino-acid chain; its full sequence is E3 ubiquitin-protein ligase mind-bomb (1226 aa).

Over residues 1-12 (MSCAATLSSAKD) the composition is skewed to polar residues. Disordered regions lie at residues 1–42 (MSCA…NTNT) and 66–87 (GGGG…AGGV). Gly residues predominate over residues 19–30 (SGGGGGGGGGGA). 2 stretches are compositionally biased toward low complexity: residues 31-42 (PTNSNTNTNTNT) and 73-86 (GGTT…AAGG). One can recognise an MIB/HERC2 1 domain in the interval 100–168 (VRRFSMEGVG…AYDLRILDSA (69 aa)). The segment at 174–226 (HEGTMCDTCRQQPIFGIRWKCAECINYDLCSICYHGDKHHLRHRFYRITTPGG) adopts a ZZ-type zinc-finger fold. Positions 179, 182, 194, 197, 203, 206, 212, and 216 each coordinate Zn(2+). The 79-residue stretch at 237–315 (SKKVLARGIF…MADLKVVNDA (79 aa)) folds into the MIB/HERC2 2 domain. ANK repeat units lie at residues 567–596 (AGHT…DVEI), 600–629 (DGDR…DLNA), 633–662 (RRQT…HPSL), 666–695 (EGDT…DITL), 699–731 (NGFN…IVEE), 735–765 (DGYT…NMDR), 769–798 (NLQT…DLNI), and 802–833 (DGDT…KLLM). The interval 890-919 (TDDSELPGNVAGTSSSARARAASGSLNQSS) is disordered. Over residues 900 to 914 (AGTSSSARARAASGS) the composition is skewed to low complexity. 2 consecutive RING-type zinc fingers follow at residues 970-1005 (CLVC…LICR) and 1017-1052 (CLVC…VLCR). A coiled-coil region spans residues 1159 to 1181 (VNNFQMDDVQKLKQQLQDIKEQT). The segment at 1183 to 1216 (CPVCFDRIKNMVFLCGHGTCQMCGDQIEGCPICR) adopts an RING-type 3 zinc-finger fold.

Interacts with intracellular domain of Dl and Ser. In terms of tissue distribution, ubiquitous in the wing imaginal disk (at protein level).

It is found in the cytoplasm. The protein localises to the cell cortex. The catalysed reaction is S-ubiquitinyl-[E2 ubiquitin-conjugating enzyme]-L-cysteine + [acceptor protein]-L-lysine = [E2 ubiquitin-conjugating enzyme]-L-cysteine + N(6)-ubiquitinyl-[acceptor protein]-L-lysine.. The protein operates within protein modification; protein ubiquitination. Functionally, E3 ubiquitin-protein ligase that mediates ubiquitination of Delta (Dl) and Serrate (Ser) receptors, which act as ligands of Notch proteins. Positively regulates the Notch signaling by ubiquitinating the intracellular domain of Dl and Ser, leading to endocytosis of Dl and Ser receptors. Regulates a subset of Notch signaling events, including wing margin specification, leg segmentation and vein determination, that are distinct from those events requiring neuralize (neur) activity. Also modulates lateral inhibition, a neur- and Dl-dependent signaling event, suggesting a distinct but partially complementary function with neur. This Drosophila melanogaster (Fruit fly) protein is E3 ubiquitin-protein ligase mind-bomb (mib1).